The following is a 305-amino-acid chain: Ribosomal RNA small subunit methyltransferase H (305 aa).

Residues 47 to 49 (GGH), aspartate 66, phenylalanine 93, aspartate 108, and glutamine 115 each bind S-adenosyl-L-methionine.

Belongs to the methyltransferase superfamily. RsmH family.

The protein resides in the cytoplasm. The catalysed reaction is cytidine(1402) in 16S rRNA + S-adenosyl-L-methionine = N(4)-methylcytidine(1402) in 16S rRNA + S-adenosyl-L-homocysteine + H(+). In terms of biological role, specifically methylates the N4 position of cytidine in position 1402 (C1402) of 16S rRNA. The protein is Ribosomal RNA small subunit methyltransferase H of Prochlorococcus marinus (strain MIT 9211).